The sequence spans 304 residues: 15-cis-phytoene synthase (304 aa).

The protein belongs to the phytoene/squalene synthase family. It depends on ATP as a cofactor. The cofactor is Mn(2+). Mg(2+) is required as a cofactor.

It catalyses the reaction 2 (2E,6E,10E)-geranylgeranyl diphosphate = 15-cis-phytoene + 2 diphosphate. Its pathway is carotenoid biosynthesis; astaxanthin biosynthesis. The protein operates within carotenoid biosynthesis; phytoene biosynthesis. Its function is as follows. Involved in the biosynthesis of carotenoids for the production of astaxanthin. Catalyzes the condensation of two molecules of geranylgeranyl diphosphate (GGPP) to give prephytoene diphosphate (PPPP) and the subsequent rearrangement of the cyclopropylcarbinyl intermediate to yield 15-cis phytoene. The chain is 15-cis-phytoene synthase (crtB) from Paracoccus sp. (strain N81106 / MBIC 01143) (Agrobacterium aurantiacum).